Consider the following 716-residue polypeptide: UvrABC system protein C (716 aa).

The GIY-YIG domain occupies 14–94 (AEPGCYLMKD…IKRHRPRFNI (81 aa)). The UVR domain occupies 206-241 (TELVERLHGRMDEAADALRFEDAARLRDQLQAVERS).

Belongs to the UvrC family. Interacts with UvrB in an incision complex.

The protein resides in the cytoplasm. The UvrABC repair system catalyzes the recognition and processing of DNA lesions. UvrC both incises the 5' and 3' sides of the lesion. The N-terminal half is responsible for the 3' incision and the C-terminal half is responsible for the 5' incision. This chain is UvrABC system protein C, found in Anaeromyxobacter sp. (strain Fw109-5).